The primary structure comprises 269 residues: Capsid assembly scaffolding protein (269 aa).

The protein belongs to the T4likevirus capsid assembly scaffolding protein family.

The protein resides in the virion. Functionally, scaffolding protein involved in the icosahedric procapsid assembly. Coassembles with the capsid proteins to form the procapsid, in which the scaffolding protein is found within the external shell of icosahedrally arranged capsid protein subunits. In a subsequent step the scaffolding protein molecules are cleaved by the viral protease and released, except for the internal peptide VII. Cleavage product of Gp22 that is incorporated into the mature phage head. This is Capsid assembly scaffolding protein (22) from Escherichia phage AR1 (Bacteriophage AR1).